The following is a 68-amino-acid chain: Small ribosomal subunit protein bS21 (68 aa).

The protein belongs to the bacterial ribosomal protein bS21 family.

In Ruegeria sp. (strain TM1040) (Silicibacter sp.), this protein is Small ribosomal subunit protein bS21.